The following is a 258-amino-acid chain: Uroplakin-1a (258 aa).

The Cytoplasmic segment spans residues 1–14 (MASAAAAEAEKGSP). Residues 15 to 35 (VVVGLLVVGNIIILLSGLSLF) traverse the membrane as a helical segment. The Extracellular portion of the chain corresponds to 36–59 (AETIWVTADQYRVYPLMGVSGKDD). A helical membrane pass occupies residues 60–86 (VFAGAWIAIFCGFSFFMVASFGVGAAL). At 87–91 (CRRRS) the chain is on the cytoplasmic side. The helical transmembrane segment at 92-112 (MVLTYLVLMLIVYIFECASCI) threads the bilayer. At 113–230 (TSYTHRDYMV…HIGHAIDSYT (118 aa)) the chain is on the extracellular side. The N-linked (GlcNAc...) asparagine glycan is linked to Asn170. The chain crosses the membrane as a helical span at residues 231 to 252 (WGISWFGFAILMWTLPVMLIAM). Residues 253–258 (YFYTML) are Cytoplasmic-facing.

This sequence belongs to the tetraspanin (TM4SF) family. In terms of assembly, homodimer; disulfide-linked. Interacts with uroplakin-2 (UPK2). High expression restricted to ureteric urothelium (most superficial cells); low expression in prostate. Expression in normal urothelial cells is lost in culture. Some expression in tumor cell lines derived from urothelial malignancies.

Its subcellular location is the membrane. In terms of biological role, component of the asymmetric unit membrane (AUM); a highly specialized biomembrane elaborated by terminally differentiated urothelial cells. May play an important role in normal bladder epithelial physiology, possibly in regulating membrane permeability of superficial umbrella cells or in stabilizing the apical membrane through AUM/cytoskeletal interactions. This chain is Uroplakin-1a (UPK1A), found in Homo sapiens (Human).